The sequence spans 209 residues: Peptidyl-tRNA hydrolase (209 aa).

Tyr14 provides a ligand contact to tRNA. His19 functions as the Proton acceptor in the catalytic mechanism. Positions 68, 70, and 116 each coordinate tRNA.

This sequence belongs to the PTH family. As to quaternary structure, monomer.

The protein resides in the cytoplasm. The enzyme catalyses an N-acyl-L-alpha-aminoacyl-tRNA + H2O = an N-acyl-L-amino acid + a tRNA + H(+). Hydrolyzes ribosome-free peptidyl-tRNAs (with 1 or more amino acids incorporated), which drop off the ribosome during protein synthesis, or as a result of ribosome stalling. In terms of biological role, catalyzes the release of premature peptidyl moieties from peptidyl-tRNA molecules trapped in stalled 50S ribosomal subunits, and thus maintains levels of free tRNAs and 50S ribosomes. The sequence is that of Peptidyl-tRNA hydrolase from Phenylobacterium zucineum (strain HLK1).